A 148-amino-acid polypeptide reads, in one-letter code: Urease accessory protein UreE (148 aa).

The protein belongs to the UreE family.

Its subcellular location is the cytoplasm. Its function is as follows. Involved in urease metallocenter assembly. Binds nickel. Probably functions as a nickel donor during metallocenter assembly. This chain is Urease accessory protein UreE, found in Nostoc punctiforme (strain ATCC 29133 / PCC 73102).